The sequence spans 219 residues: Thiamine-phosphate synthase (219 aa).

4-amino-2-methyl-5-(diphosphooxymethyl)pyrimidine is bound by residues 44-48 (QFREK) and asparagine 79. The Mg(2+) site is built by aspartate 80 and aspartate 99. Serine 117 is a 4-amino-2-methyl-5-(diphosphooxymethyl)pyrimidine binding site. 143 to 145 (TST) is a 2-[(2R,5Z)-2-carboxy-4-methylthiazol-5(2H)-ylidene]ethyl phosphate binding site. Residue lysine 146 coordinates 4-amino-2-methyl-5-(diphosphooxymethyl)pyrimidine. 2-[(2R,5Z)-2-carboxy-4-methylthiazol-5(2H)-ylidene]ethyl phosphate is bound by residues glycine 175 and 195–196 (IS).

It belongs to the thiamine-phosphate synthase family. Requires Mg(2+) as cofactor.

The catalysed reaction is 2-[(2R,5Z)-2-carboxy-4-methylthiazol-5(2H)-ylidene]ethyl phosphate + 4-amino-2-methyl-5-(diphosphooxymethyl)pyrimidine + 2 H(+) = thiamine phosphate + CO2 + diphosphate. It catalyses the reaction 2-(2-carboxy-4-methylthiazol-5-yl)ethyl phosphate + 4-amino-2-methyl-5-(diphosphooxymethyl)pyrimidine + 2 H(+) = thiamine phosphate + CO2 + diphosphate. The enzyme catalyses 4-methyl-5-(2-phosphooxyethyl)-thiazole + 4-amino-2-methyl-5-(diphosphooxymethyl)pyrimidine + H(+) = thiamine phosphate + diphosphate. Its pathway is cofactor biosynthesis; thiamine diphosphate biosynthesis; thiamine phosphate from 4-amino-2-methyl-5-diphosphomethylpyrimidine and 4-methyl-5-(2-phosphoethyl)-thiazole: step 1/1. Functionally, condenses 4-methyl-5-(beta-hydroxyethyl)thiazole monophosphate (THZ-P) and 2-methyl-4-amino-5-hydroxymethyl pyrimidine pyrophosphate (HMP-PP) to form thiamine monophosphate (TMP). In Bacillus cereus (strain ATCC 14579 / DSM 31 / CCUG 7414 / JCM 2152 / NBRC 15305 / NCIMB 9373 / NCTC 2599 / NRRL B-3711), this protein is Thiamine-phosphate synthase.